A 72-amino-acid chain; its full sequence is Large ribosomal subunit protein bL31 (72 aa).

Residues Cys-16, Cys-18, Cys-38, and Cys-41 each coordinate Zn(2+).

It belongs to the bacterial ribosomal protein bL31 family. Type A subfamily. Part of the 50S ribosomal subunit. The cofactor is Zn(2+).

Its function is as follows. Binds the 23S rRNA. In Aliivibrio salmonicida (strain LFI1238) (Vibrio salmonicida (strain LFI1238)), this protein is Large ribosomal subunit protein bL31.